The primary structure comprises 481 residues: Glutamate--tRNA ligase (481 aa).

The short motif at 9 to 19 (PSPTGNLHIGT) is the 'HIGH' region element. A 'KMSKS' region motif is present at residues 247–251 (KLSKR). Lysine 250 serves as a coordination point for ATP.

The protein belongs to the class-I aminoacyl-tRNA synthetase family. Glutamate--tRNA ligase type 1 subfamily. Monomer.

It localises to the cytoplasm. It carries out the reaction tRNA(Glu) + L-glutamate + ATP = L-glutamyl-tRNA(Glu) + AMP + diphosphate. In terms of biological role, catalyzes the attachment of glutamate to tRNA(Glu) in a two-step reaction: glutamate is first activated by ATP to form Glu-AMP and then transferred to the acceptor end of tRNA(Glu). The polypeptide is Glutamate--tRNA ligase (Nostoc punctiforme (strain ATCC 29133 / PCC 73102)).